The chain runs to 351 residues: Heat-inducible transcription repressor HrcA (351 aa).

This sequence belongs to the HrcA family.

Negative regulator of class I heat shock genes (grpE-dnaK-dnaJ and groELS operons). Prevents heat-shock induction of these operons. The polypeptide is Heat-inducible transcription repressor HrcA (Beutenbergia cavernae (strain ATCC BAA-8 / DSM 12333 / CCUG 43141 / JCM 11478 / NBRC 16432 / NCIMB 13614 / HKI 0122)).